The chain runs to 316 residues: Lipoyl synthase (316 aa).

The [4Fe-4S] cluster site is built by Cys61, Cys66, Cys72, Cys87, Cys91, Cys94, and Ser301. The region spanning 73-290 is the Radical SAM core domain; sequence FGKGTATFMI…ERAAIEMGFS (218 aa).

The protein belongs to the radical SAM superfamily. Lipoyl synthase family. It depends on [4Fe-4S] cluster as a cofactor.

Its subcellular location is the cytoplasm. The enzyme catalyses [[Fe-S] cluster scaffold protein carrying a second [4Fe-4S](2+) cluster] + N(6)-octanoyl-L-lysyl-[protein] + 2 oxidized [2Fe-2S]-[ferredoxin] + 2 S-adenosyl-L-methionine + 4 H(+) = [[Fe-S] cluster scaffold protein] + N(6)-[(R)-dihydrolipoyl]-L-lysyl-[protein] + 4 Fe(3+) + 2 hydrogen sulfide + 2 5'-deoxyadenosine + 2 L-methionine + 2 reduced [2Fe-2S]-[ferredoxin]. It participates in protein modification; protein lipoylation via endogenous pathway; protein N(6)-(lipoyl)lysine from octanoyl-[acyl-carrier-protein]: step 2/2. Functionally, catalyzes the radical-mediated insertion of two sulfur atoms into the C-6 and C-8 positions of the octanoyl moiety bound to the lipoyl domains of lipoate-dependent enzymes, thereby converting the octanoylated domains into lipoylated derivatives. In Nitrosospira multiformis (strain ATCC 25196 / NCIMB 11849 / C 71), this protein is Lipoyl synthase.